We begin with the raw amino-acid sequence, 153 residues long: MAPKAEKKPAAKKPAEEEPAAEKAEKALAGKKPKAEKRLPAGKAEKSSGEGKKAGRKKAKKSVETYKIYIFKVLKQVHPDIGISSKAMSIMNSFINDIFEKLAGESAKLARYNKKPTITSREIQTSVRLVLPGELAKHAVSEGTKAVTKFTSA.

Basic and acidic residues-rich tracts occupy residues 1–28 (MAPK…EKAL) and 36–53 (EKRL…EGKK). The segment at 1–61 (MAPKAEKKPA…KKAGRKKAKK (61 aa)) is disordered. N6-acetyllysine occurs at positions 7 and 37. Lysine 149 participates in a covalent cross-link: Glycyl lysine isopeptide (Lys-Gly) (interchain with G-Cter in ubiquitin).

This sequence belongs to the histone H2B family. In terms of assembly, the nucleosome is a histone octamer containing two molecules each of H2A, H2B, H3 and H4 assembled in one H3-H4 heterotetramer and two H2A-H2B heterodimers. The octamer wraps approximately 147 bp of DNA. Post-translationally, can be acetylated to form H2BK6ac and H2BK33ac. In terms of processing, monoubiquitinated by BRE1 to form H2BK143ub1 and deubiquitinated by UBP26. Required for heterochromatic histone H3 di- and trimethylation at H3K4me. May give a specific tag for epigenetic transcriptional activation.

Its subcellular location is the nucleus. It is found in the chromosome. Core component of nucleosome. Nucleosomes wrap and compact DNA into chromatin, limiting DNA accessibility to the cellular machineries which require DNA as a template. Histones thereby play a central role in transcription regulation, DNA repair, DNA replication and chromosomal stability. DNA accessibility is regulated via a complex set of post-translational modifications of histones, also called histone code, and nucleosome remodeling. The protein is Histone H2B.10 (H2B.10) of Oryza sativa subsp. japonica (Rice).